Here is a 118-residue protein sequence, read N- to C-terminus: UPF0102 protein lpp3065 (118 aa).

Belongs to the UPF0102 family.

This is UPF0102 protein lpp3065 from Legionella pneumophila (strain Paris).